A 367-amino-acid chain; its full sequence is Glutamate 5-kinase (367 aa).

ATP is bound at residue K17. Residues S57, D144, and N156 each contribute to the substrate site. ATP-binding positions include 176–177 (SD) and 217–223 (TGGMVSK). The 79-residue stretch at 279–357 (VGSLTLDEGA…SELPCELRRP (79 aa)) folds into the PUA domain.

Belongs to the glutamate 5-kinase family.

The protein localises to the cytoplasm. The catalysed reaction is L-glutamate + ATP = L-glutamyl 5-phosphate + ADP. It participates in amino-acid biosynthesis; L-proline biosynthesis; L-glutamate 5-semialdehyde from L-glutamate: step 1/2. Its function is as follows. Catalyzes the transfer of a phosphate group to glutamate to form L-glutamate 5-phosphate. This is Glutamate 5-kinase from Mycobacterium leprae (strain Br4923).